The sequence spans 563 residues: Beta-catenin-like protein 1 (563 aa).

Residue Met1 is modified to N-acetylmethionine. Residues 1 to 81 (MDVGELLSYQ…EEEEPLDESS (81 aa)) form a disordered region. Residues 16–33 (KRPRDDEEEELKTRRKQT) carry the Nuclear localization signal motif. Over residues 34–45 (GPRERGRYREDE) the composition is skewed to basic and acidic residues. Residues 66-78 (DGEEEEEEEEPLD) are compositionally biased toward acidic residues. 2 HEAT repeats span residues 79–129 (ESSV…VVAT) and 134–176 (YHLL…TLHE). At Lys91 the chain carries N6-acetyllysine. A Nuclear export signal (NES) motif is present at residues 130–140 (MPDLYHLLVEL). ARM repeat units follow at residues 178–228 (EEGA…MAEF), 229–273 (RPEM…LQDN), 274–323 (DENR…CLML), 325–363 (SNRE…AMIG), and 364–417 (PEGA…LLRN). Ser389 bears the Phosphoserine mark. Residues 476-540 (DMEDEFYLRR…HIIKEYAENI (65 aa)) adopt a coiled-coil conformation. Position 545 is a phosphoserine (Ser545).

Component of the PRP19-CDC5L splicing complex composed of a core complex comprising a homotetramer of PRPF19, CDC5L, PLRG1 and BCAS2, and at least three less stably associated proteins CTNNBL1, CWC15 and HSPA8. Interacts directly with CWC15 and CDC5L in the complex. Interacts with AICDA; the interaction is important for the antibody diversification activity of AICDA. Interacts with PRPF31 (via its NLS). Interacts (via its N-terminal NLS) with KPNA1 and KPNA2.

The protein resides in the nucleus. Component of the PRP19-CDC5L complex that forms an integral part of the spliceosome and is required for activating pre-mRNA splicing. Participates in AID/AICDA-mediated somatic hypermutation (SHM) and class-switch recombination (CSR), 2 processes resulting in the production of high-affinity, mutated isotype-switched antibodies. The protein is Beta-catenin-like protein 1 (Ctnnbl1) of Rattus norvegicus (Rat).